The following is a 477-amino-acid chain: MGDMGILETLVLKEKINGTEKAVIFRELIKKEMELLNDYCAKNHLFPKDYRIEFCHLHNIKKVNIARLLTILKYYDPRFIEILMSTDPKVRTFIQYFMEFLEKHPYFEDVLEPQNLFGNWDYIRYKLKILFPQLTFEEIDRFKFKRKEFINYVKEKLGEPEELIEDKLNLATWYESVPYLELESEMTPGVHPDPVMTPEEWSFIKRHIKGRKNIIIRDPDTGKEKLVYVEVDIPDEELDKYYKNREGLKKLLMERYNIDESGAEQILRKAGWEATGWHIVPPVHTDVEVVYPEEEKKEEKKVEVKREPFDIMELAKHIRYLGGRELEMLNYYELVHDKVPEIHEKLHMFMRTKRRLLGKLFGIYYTVDPVMAEAILINDPENIELLKSLTISTGLRDKKFSIYDSSKVWNEIKRRVRFIFPEVSEEEIEKFKGKRSEFVTYLAQKLGKPEEYIDERLERAGWLRSEEIPAFIRHVGP.

This is an uncharacterized protein from Aquifex aeolicus (strain VF5).